A 119-amino-acid chain; its full sequence is Large ribosomal subunit protein uL18 (119 aa).

Belongs to the universal ribosomal protein uL18 family. As to quaternary structure, part of the 50S ribosomal subunit; part of the 5S rRNA/L5/L18/L25 subcomplex. Contacts the 5S and 23S rRNAs.

This is one of the proteins that bind and probably mediate the attachment of the 5S RNA into the large ribosomal subunit, where it forms part of the central protuberance. The protein is Large ribosomal subunit protein uL18 of Legionella pneumophila (strain Paris).